The sequence spans 1279 residues: Cellulose synthase operon protein C (1279 aa).

Positions 1–21 (MRRHTLAIAILAALASTASVA) are cleaved as a signal peptide. 10 TPR repeats span residues 27–60 (QSLLIEQGYYWQSKKNPERALETWQKLLRLSPDQ), 62–94 (DALYGIGLIQVQQNHPAEAQKYLARLQALSPVP), 218–250 (ADETWRFALVWLGPPKPDQVSLFQQFLTVHPDD), 306–339 (VDALGGMGVLRQQQERYSEAENYLVQATRLPGGA), 384–417 (PGAAIALAGFQAQDNQFDDAEAGYRKVLARHPGD), 460–493 (ALRATQVGKLAEQRGDLKAAQAAYRQALDADPEN), 495–527 (WTRFALARMYLRDGQIRNARALIDGLLKSQPNQ), 606–639 (PERVAVLAAAYVEVGAAQYGLDMMQKVVENNPNP), 719–752 (ALGVGALARMYAASGNGKKAMELYAPLIQQNPNN), and 787–820 (PEILTSAARIYQGLGKNSEAAELLRKALAIENAM).

The protein operates within glycan metabolism; bacterial cellulose biosynthesis. Functionally, required for maximal bacterial cellulose synthesis. In Pseudomonas fluorescens (strain SBW25), this protein is Cellulose synthase operon protein C (bscS).